The following is a 416-amino-acid chain: Cysteate synthase (416 aa).

Lys-104 carries the post-translational modification N6-(pyridoxal phosphate)lysine. Residue Asn-130 coordinates pyridoxal 5'-phosphate.

It belongs to the threonine synthase family. Cysteate synthase subfamily. Homotrimer. Pyridoxal 5'-phosphate is required as a cofactor.

It catalyses the reaction O-phospho-L-serine + sulfite + H(+) = L-cysteate + phosphate. It functions in the pathway cofactor biosynthesis; coenzyme M biosynthesis. In terms of biological role, specifically catalyzes the beta-elimination of phosphate from L-phosphoserine and the beta-addition of sulfite to the dehydroalanine intermediate to produce L-cysteate. This is Cysteate synthase from Methanosarcina mazei (strain ATCC BAA-159 / DSM 3647 / Goe1 / Go1 / JCM 11833 / OCM 88) (Methanosarcina frisia).